The sequence spans 136 residues: Peptide methionine sulfoxide reductase MsrB (136 aa).

Residues D9–K136 form the MsrB domain. Zn(2+) is bound by residues C53, C56, C102, and C105. The active-site Nucleophile is C125.

The protein belongs to the MsrB Met sulfoxide reductase family. Zn(2+) serves as cofactor.

It catalyses the reaction L-methionyl-[protein] + [thioredoxin]-disulfide + H2O = L-methionyl-(R)-S-oxide-[protein] + [thioredoxin]-dithiol. This is Peptide methionine sulfoxide reductase MsrB from Polaromonas sp. (strain JS666 / ATCC BAA-500).